Reading from the N-terminus, the 427-residue chain is FAD-dependent monooxygenase OpS4 (427 aa).

The first 22 residues, 1–22, serve as a signal peptide directing secretion; that stretch reads MGSIREPLHLVVIGGGLAGLSA. E37 is a binding site for FAD. N54 carries an N-linked (GlcNAc...) asparagine glycan. 3 residues coordinate FAD: R112, D306, and A319.

This sequence belongs to the paxM FAD-dependent monooxygenase family. It depends on FAD as a cofactor.

It functions in the pathway secondary metabolite biosynthesis. FAD-dependent monooxygenase; part of the gene cluster that mediates the biosynthesis of the bibenzoquinone oosporein, a metabolite required for fungal virulence that acts by evading host immunity to facilitate fungal multiplication in insects. The non-reducing polyketide synthase OpS1 produces orsellinic acid by condensing acetyl-CoA with 3 malonyl-CoA units. Orsellinic acid is then hydroxylated to benzenetriol by the hydroxylase OpS4. The intermediate is oxidized either nonenzymatically to 5,5'-dideoxy-oosporein or enzymatically to benzenetetrol by the oxidoreductase OpS7. The latter is further dimerized to oosporein by the catalase OpS5. OpS6 probably functions en route for protecting cells against oxidative stress by scavenging any leaked free radical form of benzenetetrol by activating the thiol group of glutathione. The sequence is that of FAD-dependent monooxygenase OpS4 from Beauveria bassiana (strain ARSEF 2860) (White muscardine disease fungus).